Here is a 331-residue protein sequence, read N- to C-terminus: D/L-glyceraldehyde reductase (331 aa).

Tyr-51 acts as the Proton donor in catalysis. Substrate is bound at residue His-114. 213–276 is an NADP(+) binding site; it reads SAFGNNTKGL…SVTKARIAEN (64 aa).

It belongs to the aldo/keto reductase family.

It catalyses the reaction glycerol + NADP(+) = L-glyceraldehyde + NADPH + H(+). It carries out the reaction glycerol + NADP(+) = D-glyceraldehyde + NADPH + H(+). The protein operates within carbohydrate acid metabolism. Its function is as follows. Mediates the conversion of L-glyceraldehyde to glycerol in D-galacturonate catabolic process. Also able to reduce D-glyceraldehyde. In Hypocrea jecorina (Trichoderma reesei), this protein is D/L-glyceraldehyde reductase (gld1).